A 98-amino-acid polypeptide reads, in one-letter code: Large ribosomal subunit protein uL23 (98 aa).

Belongs to the universal ribosomal protein uL23 family. As to quaternary structure, part of the 50S ribosomal subunit. Contacts protein L29, and trigger factor when it is bound to the ribosome.

Functionally, one of the early assembly proteins it binds 23S rRNA. One of the proteins that surrounds the polypeptide exit tunnel on the outside of the ribosome. Forms the main docking site for trigger factor binding to the ribosome. The protein is Large ribosomal subunit protein uL23 of Caulobacter sp. (strain K31).